A 217-amino-acid chain; its full sequence is MAHRVEQDYDYLFKIVLIGDSGVGKTNILSRFTRNEFCLESKSTIGVEFATRTLQVEGKTVKAQIWDTAGQERYRAITSAYYRGAVGALLVYDITKRQTFDNVLRWLRELRDHADSNIVIMMAGNKADLNHLRSVAEEDGQTLAETEGLSFLETSALEATNVEKAFQTVLAEIYHIISKKALAAQEAAAANSAIPGQGTTINVEDTSGAGKRGCCST.

A GTP-binding site is contributed by 19-26; it reads GDSGVGKT. Residues 41 to 49 carry the Effector region motif; the sequence is SKSTIGVEF. GTP is bound by residues 67–71, 125–128, and 155–156; these read DTAGQ, NKAD, and SA. A disordered region spans residues 196 to 217; the sequence is GQGTTINVEDTSGAGKRGCCST. S-geranylgeranyl cysteine attachment occurs at residues cysteine 214 and cysteine 215.

It belongs to the small GTPase superfamily. Rab family. In terms of tissue distribution, expressed in root tips.

The protein localises to the endosome membrane. It is found in the golgi apparatus. The protein resides in the trans-Golgi network membrane. In terms of biological role, intracellular vesicle trafficking and protein transport. This Arabidopsis thaliana (Mouse-ear cress) protein is Ras-related protein RABA2d (RABA2D).